Reading from the N-terminus, the 215-residue chain is N-(5'-phosphoribosyl)anthranilate isomerase (215 aa).

This sequence belongs to the TrpF family.

It catalyses the reaction N-(5-phospho-beta-D-ribosyl)anthranilate = 1-(2-carboxyphenylamino)-1-deoxy-D-ribulose 5-phosphate. It functions in the pathway amino-acid biosynthesis; L-tryptophan biosynthesis; L-tryptophan from chorismate: step 3/5. This is N-(5'-phosphoribosyl)anthranilate isomerase from Pelodictyon phaeoclathratiforme (strain DSM 5477 / BU-1).